Consider the following 100-residue polypeptide: Urease subunit gamma (100 aa).

This sequence belongs to the urease gamma subunit family. In terms of assembly, heterotrimer of UreA (gamma), UreB (beta) and UreC (alpha) subunits. Three heterotrimers associate to form the active enzyme.

It localises to the cytoplasm. It carries out the reaction urea + 2 H2O + H(+) = hydrogencarbonate + 2 NH4(+). It functions in the pathway nitrogen metabolism; urea degradation; CO(2) and NH(3) from urea (urease route): step 1/1. The polypeptide is Urease subunit gamma (Bacillus cereus (strain ATCC 10987 / NRS 248)).